The sequence spans 1036 residues: ADAMTS-like protein 4 (1036 aa).

The N-terminal stretch at 1–24 is a signal peptide; it reads MESWLGRLWLCMMLLLPLPQPCQD. Residues 47–91 form the TSP type-1 1 domain; sequence GPWGRWASCSQPCGVGVQRRSRTCELHPALPLPPRPPRHPEAHRP. Disordered stretches follow at residues 73–149 and 163–308; these read HPAL…IKPG and HRSR…WLPL. Residues 163 to 173 are compositionally biased toward basic residues; that stretch reads HRSRRHPHRPG. The segment covering 215 to 253 has biased composition (polar residues); that stretch reads TPRSGTAQTEVLPRTSSAPSYTGTPAPTSSFGDSRSFQG. Residues N454 and N737 are each glycosylated (N-linked (GlcNAc...) asparagine). TSP type-1 domains follow at residues 687 to 748, 750 to 804, 805 to 871, 872 to 931, and 932 to 988; these read CPPY…HLCG, WEIS…DMGP, CTTA…GPCE, RTWR…QGQA, and CEDK…QPCN. The PLAC domain maps to 991–1028; sequence PDDQCKDSSPHCPLVVQARLCVYPYYTTTCCRSCAHVL.

As to quaternary structure, interacts with CTSB. Interacts with FBN1. In terms of processing, glycosylated. Can be O-fucosylated by POFUT2 on a serine or a threonine residue found within the consensus sequence C1-X(2)-(S/T)-C2-G of the TSP type-1 repeat domains where C1 and C2 are the first and second cysteine residue of the repeat, respectively. Fucosylated repeats can then be further glycosylated by the addition of a beta-1,3-glucose residue by the glucosyltransferase, B3GALTL. Fucosylation mediates the efficient secretion of ADAMTS family members. Can also be C-glycosylated with one or two mannose molecules on tryptophan residues within the consensus sequence W-X-X-W of the TPRs, and N-glycosylated. These other glycosylations can also facilitate secretion. Widely expressed in a range of tissues. Especially prevalent in brain, spinal cord, muscle, lung and heart.

The protein localises to the secreted. Its subcellular location is the extracellular space. The protein resides in the extracellular matrix. In terms of biological role, positive regulation of apoptosis. May facilitate FBN1 microfibril biogenesis. The polypeptide is ADAMTS-like protein 4 (Mus musculus (Mouse)).